A 125-amino-acid chain; its full sequence is N-alpha-acetyltransferase 38, NatC auxiliary subunit (125 aa).

The tract at residues 1–42 is disordered; sequence MAGAGPTMLLREENGCCSRRQSSSSAGDSDGEQEDSPATRAR. N-acetylalanine is present on Ala-2. A compositionally biased stretch (low complexity) spans 18–28; the sequence is SRRQSSSSAGD. A phosphoserine mark is found at Ser-22, Ser-25, and Ser-29. The region spanning 40 to 118 is the Sm domain; sequence RARQQLEALL…IVSIEVQRES (79 aa).

It belongs to the snRNP Sm proteins family. Component of the N-terminal acetyltransferase C (NatC) complex, which is composed of NAA35, NAA38 and NAA30.

Its subcellular location is the cytoplasm. It is found in the nucleus. Its function is as follows. Auxillary component of the N-terminal acetyltransferase C (NatC) complex which catalyzes acetylation of N-terminal methionine residues. N-terminal acetylation protects proteins from ubiquitination and degradation by the N-end rule pathway. The polypeptide is N-alpha-acetyltransferase 38, NatC auxiliary subunit (Naa38) (Mus musculus (Mouse)).